A 505-amino-acid chain; its full sequence is Glycerol kinase (505 aa).

Residue threonine 12 coordinates ADP. The ATP site is built by threonine 12, threonine 13, and serine 14. A sn-glycerol 3-phosphate-binding site is contributed by threonine 12. Arginine 16 contacts ADP. Sn-glycerol 3-phosphate is bound by residues arginine 82, glutamate 83, tyrosine 134, and aspartate 249. Positions 82, 83, 134, 249, and 250 each coordinate glycerol. The ADP site is built by threonine 271 and glycine 315. The ATP site is built by threonine 271, glycine 315, glutamine 319, and glycine 416. Residues glycine 416 and asparagine 420 each coordinate ADP.

Belongs to the FGGY kinase family.

The catalysed reaction is glycerol + ATP = sn-glycerol 3-phosphate + ADP + H(+). The protein operates within polyol metabolism; glycerol degradation via glycerol kinase pathway; sn-glycerol 3-phosphate from glycerol: step 1/1. Inhibited by fructose 1,6-bisphosphate (FBP). In terms of biological role, key enzyme in the regulation of glycerol uptake and metabolism. Catalyzes the phosphorylation of glycerol to yield sn-glycerol 3-phosphate. This chain is Glycerol kinase, found in Mycolicibacterium vanbaalenii (strain DSM 7251 / JCM 13017 / BCRC 16820 / KCTC 9966 / NRRL B-24157 / PYR-1) (Mycobacterium vanbaalenii).